Consider the following 347-residue polypeptide: Quinolinate synthase (347 aa).

2 residues coordinate iminosuccinate: His-47 and Ser-68. Residue Cys-113 coordinates [4Fe-4S] cluster. Residues 139–141 (YAN) and Ser-156 each bind iminosuccinate. Cys-200 is a [4Fe-4S] cluster binding site. Residues 226 to 228 (HPE) and Thr-243 contribute to the iminosuccinate site. Cys-297 is a binding site for [4Fe-4S] cluster.

It belongs to the quinolinate synthase family. Type 1 subfamily. It depends on [4Fe-4S] cluster as a cofactor.

It localises to the cytoplasm. The catalysed reaction is iminosuccinate + dihydroxyacetone phosphate = quinolinate + phosphate + 2 H2O + H(+). It functions in the pathway cofactor biosynthesis; NAD(+) biosynthesis; quinolinate from iminoaspartate: step 1/1. In terms of biological role, catalyzes the condensation of iminoaspartate with dihydroxyacetone phosphate to form quinolinate. The protein is Quinolinate synthase of Enterobacter sp. (strain 638).